We begin with the raw amino-acid sequence, 95 residues long: Aspartyl/glutamyl-tRNA(Asn/Gln) amidotransferase subunit C (95 aa).

Belongs to the GatC family. Heterotrimer of A, B and C subunits.

It catalyses the reaction L-glutamyl-tRNA(Gln) + L-glutamine + ATP + H2O = L-glutaminyl-tRNA(Gln) + L-glutamate + ADP + phosphate + H(+). The catalysed reaction is L-aspartyl-tRNA(Asn) + L-glutamine + ATP + H2O = L-asparaginyl-tRNA(Asn) + L-glutamate + ADP + phosphate + 2 H(+). Functionally, allows the formation of correctly charged Asn-tRNA(Asn) or Gln-tRNA(Gln) through the transamidation of misacylated Asp-tRNA(Asn) or Glu-tRNA(Gln) in organisms which lack either or both of asparaginyl-tRNA or glutaminyl-tRNA synthetases. The reaction takes place in the presence of glutamine and ATP through an activated phospho-Asp-tRNA(Asn) or phospho-Glu-tRNA(Gln). This Campylobacter concisus (strain 13826) protein is Aspartyl/glutamyl-tRNA(Asn/Gln) amidotransferase subunit C.